A 194-amino-acid polypeptide reads, in one-letter code: MSPITTLLIGIAMSTDAFAAAIGKGAAIGKPRLRDALYVAVIFGVIETATPIAGWLLGQVASHYIATFDHWIAFGLLGGLGIHMIVNGLKNNGNTCKDNADTHNRNSRWLTLAATALATSIDAAAIGISMAFLDIHIGIVAAVIGLCTFTMVIFGVMLGRVLGTFVGNRAEIVGGIILIIVGSTILYEHLSNTG.

6 helical membrane passes run 3–23 (PITT…AAIG), 37–57 (LYVA…GWLL), 65–85 (IATF…IHMI), 112–132 (LAAT…SMAF), 137–157 (IGIV…FGVM), and 170–190 (AEIV…YEHL).

Belongs to the MntP (TC 9.B.29) family.

It is found in the cell inner membrane. In terms of biological role, probably functions as a manganese efflux pump. This chain is Putative manganese efflux pump MntP, found in Xylella fastidiosa (strain M23).